The following is a 601-amino-acid chain: uncharacterized protein (601 aa).

The segment covering 24–35 (RKSNVVLKKNKG) has biased composition (basic residues). Disordered stretches follow at residues 24 to 106 (RKSN…LKLD) and 171 to 219 (YGND…PREE). Residues 54–81 (SQFSSRDNFRTTQTQASSSSEPSDNTNR) are compositionally biased toward polar residues. Positions 92–106 (TPKKEESNAEKLKLD) are enriched in basic and acidic residues. Phosphoserine is present on residues Ser236 and Ser238. The segment at 260-283 (RKRKVLSSSSEDDESSSPEDLLKP) is disordered.

Its subcellular location is the nucleus. This is an uncharacterized protein from Schizosaccharomyces pombe (strain 972 / ATCC 24843) (Fission yeast).